The primary structure comprises 186 residues: dITP/XTP pyrophosphatase (186 aa).

7–12 (TSNPGK) lines the substrate pocket. Positions 36 and 65 each coordinate Mg(2+). Catalysis depends on Asp65, which acts as the Proton acceptor. Substrate-binding positions include Ser66, 140-143 (FGYD), Lys163, and 168-169 (HR).

The protein belongs to the HAM1 NTPase family. Homodimer. It depends on Mg(2+) as a cofactor. Mn(2+) is required as a cofactor.

The enzyme catalyses XTP + H2O = XMP + diphosphate + H(+). It catalyses the reaction dITP + H2O = dIMP + diphosphate + H(+). The catalysed reaction is ITP + H2O = IMP + diphosphate + H(+). In terms of biological role, pyrophosphatase that catalyzes the hydrolysis of nucleoside triphosphates to their monophosphate derivatives, with a high preference for the non-canonical purine nucleotides XTP (xanthosine triphosphate), dITP (deoxyinosine triphosphate) and ITP. Seems to function as a house-cleaning enzyme that removes non-canonical purine nucleotides from the nucleotide pool, thus preventing their incorporation into DNA/RNA and avoiding chromosomal lesions. The sequence is that of dITP/XTP pyrophosphatase from Pyrococcus horikoshii (strain ATCC 700860 / DSM 12428 / JCM 9974 / NBRC 100139 / OT-3).